Reading from the N-terminus, the 1042-residue chain is SWI/SNF-related matrix-associated actin-dependent regulator of chromatin subfamily A member 1 (1042 aa).

Residues 25–82 (EDEQPGPSTSQEEGAAAAATEATAATEKGEKKKEKNVSSFQLKLAAKAPKSEKEMDPE) are disordered. Positions 36-50 (EEGAAAAATEATAAT) are enriched in low complexity. Composition is skewed to basic and acidic residues over residues 51-60 (EKGEKKKEKN) and 73-82 (PKSEKEMDPE). Ser-116 and Ser-119 each carry phosphoserine. The region spanning 195–360 (ISLYENGVNG…WALLNFLLPD (166 aa)) is the Helicase ATP-binding domain. 208-215 (DEMGLGKT) contributes to the ATP binding site. The short motif at 311–314 (DEAH) is the DEAH box element. Positions 490–641 (VLDKLLAKLK…SIVIQQGRLI (152 aa)) constitute a Helicase C-terminal domain. Glycyl lysine isopeptide (Lys-Gly) (interchain with G-Cter in SUMO2) cross-links involve residues Lys-650, Lys-716, and Lys-738. Residues 819–849 (EQKKIDGAEPLTPEETEEKEKLLTQGFTNWT) are disordered. The segment covering 828-837 (PLTPEETEEK) has biased composition (basic and acidic residues). The SANT 1 domain occupies 843–895 (QGFTNWTKRDFNQFIKANEKYGRDDIDNIAREVEGKSPEEVMEYSAVFWERCN). Tyr-942 carries the phosphotyrosine modification. Positions 946 to 1010 (KGKNYTEEED…QRRCNTLISL (65 aa)) constitute an SANT 2 domain.

Belongs to the SNF2/RAD54 helicase family. ISWI subfamily. As to quaternary structure, may form homodimers. Component of the ACF-1 ISWI chromatin remodeling complex at least composed of SMARCA1 and BAZ1A, which regulates the spacing of histone octamers on the DNA template to facilitate access to DNA. Within the complex interacts with BAZ1A; the interaction is direct. Component of the WICH-1 ISWI chromatin remodeling complex at least composed of SMARCA1 and BAZ1B/WSTF. Within the complex interacts with BAZ1B/WSTF. Component of the NoRC-1 ISWI chromatin remodeling complex at least composed of SMARCA1 and BAZ2A/TIP5. Within the complex interacts with BAZ2A/TIP5. Component of the BRF-1 ISWI chromatin remodeling complex at least composed of SMARCA1 and BAZ2B. Within the complex interacts with BAZ2B. Component of the NURF-1 ISWI chromatin remodeling complex (also called the nucleosome-remodeling factor (NURF) complex) at least composed of SMARCA1, BPTF, RBBP4 and RBBP7. Within the complex interacts with BPTF. Within the complex interacts with RBBP4 and RBBP7. Component of the CERF-1 ISWI chromatin remodeling complex (also called the CECR2-containing-remodeling factor (CERF) complex) at least composed of CECR2 and SMARCA1. LUZP1 is detected as part of the CERF-1 complex in embryonic stem cells where it is involved in complex stabilization but is not detected in the complex in the testis. Component of the RSF-1 ISWI chromatin remodeling complex at least composed of SMARCA1 and RSF1. Within the complex interacts with RSF1. Interacts with PRLR. Interacts with ERCC6. In terms of assembly, may form homodimers. Component of the BPFT-SMARCA1 complex at least composed of SMARCA1, BPFT, RBBP4 and RBBP7; the complex is catalytically inactive and does not remodel chromatin. Within the complex interacts with BPTF, RBBP4 and RBBP7. Component of the BAZ1A-1-SMARCA1 complex at least composed of SMARCA1 and BAZ1A; the complex is catalytically inactive and does not remodel chromatin. Component of the BAZ1B-1-SMARCA1 complex at least composed of SMARCA1 and BAZ1B; the complex is catalytically inactive and does not remodel chromatin. As to expression, expressed in lung, breast, kidney, ovary, skeletal muscle and brain. In terms of tissue distribution, mainly expressed in non-neuronal tissues such as lung, breast, kidney, and ovary.

It is found in the nucleus. Its subcellular location is the chromosome. The catalysed reaction is ATP + H2O = ADP + phosphate + H(+). Its function is as follows. ATPase that possesses intrinsic ATP-dependent chromatin-remodeling activity. ATPase activity is substrate-dependent, and is increased when nucleosomes are the substrate, but is also catalytically active when DNA alone is the substrate. Catalytic subunit of ISWI chromatin-remodeling complexes, which form ordered nucleosome arrays on chromatin and facilitate access to DNA during DNA-templated processes such as DNA replication, transcription, and repair. Within the ISWI chromatin-remodeling complexes, slides edge- and center-positioned histone octamers away from their original location on the DNA template. Catalytic activity and histone octamer sliding propensity is regulated and determined by components of the ISWI chromatin-remodeling complexes. The BAZ1A-, BAZ1B-, BAZ2A- and BAZ2B-containing ISWI chromatin-remodeling complexes regulate the spacing of nucleosomes along the chromatin and have the ability to slide mononucleosomes to the center of a DNA template. The CECR2- and RSF1-containing ISWI chromatin-remodeling complexes do not have the ability to slide mononucleosomes to the center of a DNA template. Within the NURF-1 and CERF-1 ISWI chromatin remodeling complexes, nucleosomes are the preferred substrate for its ATPase activity. Within the NURF-1 ISWI chromatin-remodeling complex, binds to the promoters of En1 and En2 to positively regulate their expression and promote brain development. May promote neurite outgrowth. May be involved in the development of luteal cells. Facilitates nucleosome assembly during DNA replication, ensuring replication fork progression and genomic stability by preventing replication stress and nascent DNA gaps. Functionally, catalytically inactive when either DNA or nucleosomes are the substrate and does not possess chromatin-remodeling activity. Acts as a negative regulator of chromatin remodelers by generating inactive complexes. The sequence is that of SWI/SNF-related matrix-associated actin-dependent regulator of chromatin subfamily A member 1 from Homo sapiens (Human).